Reading from the N-terminus, the 284-residue chain is Tropomyosin (284 aa).

Residues 1-273 adopt a coiled-coil conformation; it reads MDAIKKKMVA…KEKYKAISDE (273 aa). Residues 110–130 show a composition bias toward basic and acidic residues; it reads SGKLEEASKAADESERNRKVL. A disordered region spans residues 110 to 134; sequence SGKLEEASKAADESERNRKVLENLN.

This sequence belongs to the tropomyosin family. In terms of assembly, homodimer.

In terms of biological role, tropomyosin, in association with the troponin complex, plays a central role in the calcium dependent regulation of muscle contraction. The polypeptide is Tropomyosin (Perna viridis (Asian green mussel)).